The chain runs to 137 residues: Sporulation-specific cell division protein SsgB (137 aa).

The protein belongs to the SsgA family. As to quaternary structure, interacts with SsgA. Interacts with FtsZ (via N-terminus).

It is found in the cell septum. Its function is as follows. Involved in sporulation-specific cell division. Required for early stages of sporulation. Important in the process of growth cessation prior to sporulation-specific cell division. Recruits cell division protein FtsZ to the future septum sites and tethers the contractile ring structure (Z ring) to the cytoplasmic membrane during sporulation. Stimulates polymerization and filament length of FtsZ in vitro. In Streptomyces coelicolor (strain ATCC BAA-471 / A3(2) / M145), this protein is Sporulation-specific cell division protein SsgB.